The sequence spans 145 residues: UPF0201 protein M164_1168 (145 aa).

The protein belongs to the UPF0201 family.

The polypeptide is UPF0201 protein M164_1168 (Saccharolobus islandicus (strain M.16.4 / Kamchatka #3) (Sulfolobus islandicus)).